Consider the following 534-residue polypeptide: Serine/threonine-protein kinase NLK (534 aa).

Sufficient for interaction with DAPK3 regions lie at residues 8 to 132 and 131 to 423; these read LVSC…KAHH and HHHQ…SKRI. 2 required for interaction with TAB2 regions span residues 8-311 and 441-534; these read LVSC…VVTQ and YHTC…LVWE. Disordered stretches follow at residues 29-79 and 97-147; these read AAAA…SSAA and QQPY…DIEP. Residues 33 to 61 are compositionally biased toward basic residues; that stretch reads GHHHHHHHHLPHLPPPHLHHHHHPQHHLH. A compositionally biased stretch (low complexity) spans 110 to 126; the sequence is PGPAAAAPAQVQAAAAA. The segment covering 129 to 138 has biased composition (basic residues); the sequence is KAHHHQHSHH. The 290-residue stretch at 145–434 folds into the Protein kinase domain; that stretch reads IEPDRPIGYG…AKDALAHPYL (290 aa). ATP-binding positions include 151 to 159 and lysine 174; that span reads IGYGAFGVV. Aspartate 271 functions as the Proton acceptor in the catalytic mechanism. Threonine 305 is modified (phosphothreonine; by autocatalysis). Residues 305–307 carry the TQE motif; the sequence is TQE. The interval 435-534 is required for homodimerization and kinase activation and localization to the nucleus; that stretch reads DEGRLRYHTC…EMPPSPLVWE (100 aa). The residue at position 529 (serine 529) is a Phosphoserine.

The protein belongs to the protein kinase superfamily. CMGC Ser/Thr protein kinase family. MAP kinase subfamily. In terms of assembly, homodimer. Homodimerization is required for intermolecular autophosphorylation, kinase activation and nuclear localization. May interact with components of cullin-RING-based SCF (SKP1-CUL1-F-box protein) E3 ubiquitin-protein ligase complexes. Interacts with LEF1, MEF2A, MYBL1 and MYBL2. Interacts with the upstream activating kinases HIPK2 and MAP3K7/TAK1. Interaction with MAP3K7/TAK1 seems to be indirect, and may be mediated by other proteins such as STAT3, TAB1 and TAB2. Interacts with and phosphorylates a number of transcription factors including FOXO1, FOXO3, FOXO4, MYB, NOTCH1 and TCF7L2/TCF4. Interacts with DAPK3/ZIPK, and this interaction may disrupt interaction with transcription factors such as TCF7L2/TCF4. Forms a transcriptional repressor complex with CHD7, PPARG and SETDB1. Interacts with RNF138/NARF. Interacts with ATF5; the interaction stabilizes ATF5 at the protein level in a kinase-independent manner. It depends on Mg(2+) as a cofactor. In terms of processing, phosphorylated on Thr-305. Intermolecular autophosphorylation on Thr-305 activates the enzyme.

The protein resides in the nucleus. Its subcellular location is the cytoplasm. It catalyses the reaction L-seryl-[protein] + ATP = O-phospho-L-seryl-[protein] + ADP + H(+). It carries out the reaction L-threonyl-[protein] + ATP = O-phospho-L-threonyl-[protein] + ADP + H(+). Activated by the non-canonical Wnt signaling pathway, in which WNT5A leads to activation of MAP3K7/TAK1 and HIPK2, which subsequently phosphorylates and activates this protein. Activated by dimerization and subsequent intermolecular autophosphorylation on Thr-305. Other cytokines such as IL6 may also activate this regulatory circuit. Serine/threonine-protein kinase that regulates a number of transcription factors with key roles in cell fate determination. Positive effector of the non-canonical Wnt signaling pathway, acting downstream of WNT5A, MAP3K7/TAK1 and HIPK2. Negative regulator of the canonical Wnt/beta-catenin signaling pathway. Binds to and phosphorylates TCF7L2/TCF4 and LEF1, promoting the dissociation of the TCF7L2/LEF1/beta-catenin complex from DNA, as well as the ubiquitination and subsequent proteolysis of LEF1. Together these effects inhibit the transcriptional activation of canonical Wnt/beta-catenin target genes. Negative regulator of the Notch signaling pathway. Binds to and phosphorylates NOTCH1, thereby preventing the formation of a transcriptionally active ternary complex of NOTCH1, RBPJ/RBPSUH and MAML1. Negative regulator of the MYB family of transcription factors. Phosphorylation of MYB leads to its subsequent proteolysis while phosphorylation of MYBL1 and MYBL2 inhibits their interaction with the coactivator CREBBP. Other transcription factors may also be inhibited by direct phosphorylation of CREBBP itself. Acts downstream of IL6 and MAP3K7/TAK1 to phosphorylate STAT3, which is in turn required for activation of NLK by MAP3K7/TAK1. Upon IL1B stimulus, cooperates with ATF5 to activate the transactivation activity of C/EBP subfamily members. Phosphorylates ATF5 but also stabilizes ATF5 protein levels in a kinase-independent manner. Acts as an inhibitor of the mTORC1 complex in response to osmotic stress by mediating phosphorylation of RPTOR, thereby preventing recruitment of the mTORC1 complex to lysosomes. The chain is Serine/threonine-protein kinase NLK (NLK) from Bos taurus (Bovine).